The chain runs to 182 residues: UPF0397 protein VV2_1534 (182 aa).

5 helical membrane passes run 8–28 (VVVI…MFGI), 41–61 (AVLA…VGFI), 72–92 (WGVW…IGLF), 110–130 (FSLF…CSAF), and 146–166 (QLTI…YFIL).

Belongs to the UPF0397 family.

It is found in the cell membrane. The protein is UPF0397 protein VV2_1534 of Vibrio vulnificus (strain CMCP6).